The primary structure comprises 278 residues: NADPH-dependent 7-cyano-7-deazaguanine reductase (278 aa).

87–89 contacts substrate; the sequence is IES. NADPH is bound at residue 89 to 90; sequence SK. Cys-185 functions as the Thioimide intermediate in the catalytic mechanism. Asp-192 functions as the Proton donor in the catalytic mechanism. 224–225 serves as a coordination point for substrate; it reads HE. 253–254 provides a ligand contact to NADPH; that stretch reads RG. The disordered stretch occupies residues 255 to 278; it reads GLDINPYRSTNPTFSVQNHRSFRQ. Polar residues predominate over residues 261 to 278; sequence YRSTNPTFSVQNHRSFRQ.

This sequence belongs to the GTP cyclohydrolase I family. QueF type 2 subfamily. In terms of assembly, homodimer.

The protein localises to the cytoplasm. It carries out the reaction 7-aminomethyl-7-carbaguanine + 2 NADP(+) = 7-cyano-7-deazaguanine + 2 NADPH + 3 H(+). It participates in tRNA modification; tRNA-queuosine biosynthesis. In terms of biological role, catalyzes the NADPH-dependent reduction of 7-cyano-7-deazaguanine (preQ0) to 7-aminomethyl-7-deazaguanine (preQ1). The chain is NADPH-dependent 7-cyano-7-deazaguanine reductase from Coxiella burnetii (strain CbuG_Q212) (Coxiella burnetii (strain Q212)).